The chain runs to 260 residues: Thiazole synthase (260 aa).

Lysine 96 acts as the Schiff-base intermediate with DXP in catalysis. 1-deoxy-D-xylulose 5-phosphate is bound by residues glycine 157, 184-185 (AG), and 206-207 (NT).

It belongs to the ThiG family. In terms of assembly, homotetramer. Forms heterodimers with either ThiH or ThiS.

Its subcellular location is the cytoplasm. The catalysed reaction is [ThiS sulfur-carrier protein]-C-terminal-Gly-aminoethanethioate + 2-iminoacetate + 1-deoxy-D-xylulose 5-phosphate = [ThiS sulfur-carrier protein]-C-terminal Gly-Gly + 2-[(2R,5Z)-2-carboxy-4-methylthiazol-5(2H)-ylidene]ethyl phosphate + 2 H2O + H(+). It functions in the pathway cofactor biosynthesis; thiamine diphosphate biosynthesis. In terms of biological role, catalyzes the rearrangement of 1-deoxy-D-xylulose 5-phosphate (DXP) to produce the thiazole phosphate moiety of thiamine. Sulfur is provided by the thiocarboxylate moiety of the carrier protein ThiS. In vitro, sulfur can be provided by H(2)S. The polypeptide is Thiazole synthase (Rhodopseudomonas palustris (strain ATCC BAA-98 / CGA009)).